The primary structure comprises 501 residues: 2,3-bisphosphoglycerate-independent phosphoglycerate mutase (501 aa).

The Mn(2+) site is built by Asp-10 and Ser-60. The active-site Phosphoserine intermediate is the Ser-60. Residues His-121, 151 to 152 (RD), Arg-182, Arg-188, 256 to 259 (RPDR), and Lys-329 contribute to the substrate site. 5 residues coordinate Mn(2+): Asp-394, His-398, Asp-435, His-436, and His-453.

The protein belongs to the BPG-independent phosphoglycerate mutase family. In terms of assembly, monomer. Requires Mn(2+) as cofactor.

The catalysed reaction is (2R)-2-phosphoglycerate = (2R)-3-phosphoglycerate. The protein operates within carbohydrate degradation; glycolysis; pyruvate from D-glyceraldehyde 3-phosphate: step 3/5. Functionally, catalyzes the interconversion of 2-phosphoglycerate and 3-phosphoglycerate. In Mycoplasmopsis synoviae (strain 53) (Mycoplasma synoviae), this protein is 2,3-bisphosphoglycerate-independent phosphoglycerate mutase.